Here is a 454-residue protein sequence, read N- to C-terminus: Probable succinate-semialdehyde dehydrogenase [NADP(+)] (454 aa).

Residues 130–131 (WN), 154–157 (KHAS), and 206–207 (GS) each bind NADP(+). Glutamate 228 serves as the catalytic Proton acceptor. Leucine 229 contributes to the NADP(+) binding site. Cysteine 262 functions as the Nucleophile in the catalytic mechanism. Glutamate 359 is an NADP(+) binding site.

The protein belongs to the aldehyde dehydrogenase family.

It catalyses the reaction succinate semialdehyde + NADP(+) + H2O = succinate + NADPH + 2 H(+). Its pathway is amino-acid degradation; 4-aminobutanoate degradation. Its function is as follows. Catalyzes the NADP(+) dependent oxidation of succinate semialdehyde to succinate. The sequence is that of Probable succinate-semialdehyde dehydrogenase [NADP(+)] (gabD) from Synechocystis sp. (strain ATCC 27184 / PCC 6803 / Kazusa).